A 481-amino-acid chain; its full sequence is UDP-N-acetylmuramate--L-alanine ligase (481 aa).

115 to 121 (GTHGKTT) contacts ATP.

The protein belongs to the MurCDEF family.

The protein localises to the cytoplasm. The catalysed reaction is UDP-N-acetyl-alpha-D-muramate + L-alanine + ATP = UDP-N-acetyl-alpha-D-muramoyl-L-alanine + ADP + phosphate + H(+). Its pathway is cell wall biogenesis; peptidoglycan biosynthesis. Cell wall formation. This Rhodospirillum rubrum (strain ATCC 11170 / ATH 1.1.1 / DSM 467 / LMG 4362 / NCIMB 8255 / S1) protein is UDP-N-acetylmuramate--L-alanine ligase.